We begin with the raw amino-acid sequence, 225 residues long: Ribonuclease 3 (225 aa).

Residues 5 to 127 (IDKLERKIGY…IIGAVYLDSD (123 aa)) form the RNase III domain. Glutamate 40 provides a ligand contact to Mg(2+). The active site involves aspartate 44. Aspartate 113 and glutamate 116 together coordinate Mg(2+). Residue glutamate 116 is part of the active site. The 71-residue stretch at 154-224 (DPKTRLQEFL…AETALEQLSN (71 aa)) folds into the DRBM domain.

The protein belongs to the ribonuclease III family. As to quaternary structure, homodimer. Mg(2+) serves as cofactor.

The protein resides in the cytoplasm. The enzyme catalyses Endonucleolytic cleavage to 5'-phosphomonoester.. Functionally, digests double-stranded RNA. Involved in the processing of primary rRNA transcript to yield the immediate precursors to the large and small rRNAs (23S and 16S). Processes some mRNAs, and tRNAs when they are encoded in the rRNA operon. Processes pre-crRNA and tracrRNA of type II CRISPR loci if present in the organism. The sequence is that of Ribonuclease 3 from Vibrio atlanticus (strain LGP32) (Vibrio splendidus (strain Mel32)).